The chain runs to 198 residues: Putative transposase InsO for insertion sequence element IS911B (198 aa).

One can recognise an Integrase catalytic domain in the interval 105–198 (AVTEPNQVWC…YCGDTGSGRV (94 aa)).

Involved in the transposition of the insertion sequence IS911B. In Escherichia coli (strain K12), this protein is Putative transposase InsO for insertion sequence element IS911B (insO2).